Here is a 210-residue protein sequence, read N- to C-terminus: Large ribosomal subunit protein uL3 (210 aa).

The protein belongs to the universal ribosomal protein uL3 family. In terms of assembly, part of the 50S ribosomal subunit. Forms a cluster with proteins L14 and L19.

In terms of biological role, one of the primary rRNA binding proteins, it binds directly near the 3'-end of the 23S rRNA, where it nucleates assembly of the 50S subunit. The sequence is that of Large ribosomal subunit protein uL3 from Amoebophilus asiaticus (strain 5a2).